Here is a 1284-residue protein sequence, read N- to C-terminus: 1,6-alpha-glucosyltransferase (1284 aa).

Residues 1 to 35 (MRPPNKEIPRILAFFTAFTLFGSTLALLPAPPAHA) form the signal peptide. Asp-433 serves as the catalytic Nucleophile. Asp-436 is a catalytic residue. Asp-495 acts as the Proton donor in catalysis. CBM6 domains follow at residues 856-988 (SQYE…ITVP) and 994-1120 (GKYE…LLLS).

This sequence belongs to the glycosyl hydrolase 31 family.

The protein resides in the secreted. The enzyme catalyses 2 D-maltotetraose = alpha-isomaltosyl-(1-&gt;4)-D-maltotriose + D-maltotriose. It catalyses the reaction Transfers an alpha-D-glucosyl residue in a (1-&gt;4)-alpha-D-glucan to the primary hydroxy group of glucose, free or combined in a (1-&gt;4)-alpha-D-glucan.. With respect to regulation, strongly activated and stabilized by various divalent cations. Strongly inhibited by Cu(2+), Hg(2+) and EDTA, and moderately inhibited by Tris. Functionally, glycosyltransferase involved, together with CtsY, in the conversion of alpha-1,4-glucan into a cyclic tetrasaccharide (CTS) constructed from four alpha-glucopyranosyl residues. Catalyzes an intermolecular transglucosylation in which a glucose residue at the non-reducing end of maltotetraose is transferred to the 6-OH of an other non-reducing glucose, leading to the formation of alpha-isomaltosyl-(1-&gt;4)-D-maltotriose. Has a wide substrate specificity, and acts on oligosaccharides with alpha-1,4-glucosidic linkages at the non-reducing end, except for maltose. In contrast, has little activity toward oligosaccharides with alpha-1,6-glucosidic linkages at the non-reducing end. In Sporosarcina globispora (Bacillus globisporus), this protein is 1,6-alpha-glucosyltransferase.